We begin with the raw amino-acid sequence, 106 residues long: Thioredoxin-2 (106 aa).

The Thioredoxin domain maps to Met1–Ile106. Catalysis depends on nucleophile residues Cys32 and Cys35. Cys32 and Cys35 are oxidised to a cystine.

It belongs to the thioredoxin family. In terms of assembly, monomer.

Participates in various redox reactions through the reversible oxidation of its active center dithiol to a disulfide and catalyzes dithiol-disulfide exchange reactions. As a reducing substrate of peroxiredoxin 1, thioredoxin 2 is preferred over thioredoxin 1. This is Thioredoxin-2 from Drosophila melanogaster (Fruit fly).